The following is a 199-amino-acid chain: Peptidyl-tRNA hydrolase (199 aa).

Tyr25 lines the tRNA pocket. His30 (proton acceptor) is an active-site residue. 3 residues coordinate tRNA: Tyr76, Asn78, and Asn124.

This sequence belongs to the PTH family. Monomer.

Its subcellular location is the cytoplasm. It catalyses the reaction an N-acyl-L-alpha-aminoacyl-tRNA + H2O = an N-acyl-L-amino acid + a tRNA + H(+). Functionally, hydrolyzes ribosome-free peptidyl-tRNAs (with 1 or more amino acids incorporated), which drop off the ribosome during protein synthesis, or as a result of ribosome stalling. Catalyzes the release of premature peptidyl moieties from peptidyl-tRNA molecules trapped in stalled 50S ribosomal subunits, and thus maintains levels of free tRNAs and 50S ribosomes. This Mycobacterium leprae (strain Br4923) protein is Peptidyl-tRNA hydrolase.